The following is a 264-amino-acid chain: ATP synthase subunit a (264 aa).

A run of 6 helical transmembrane segments spans residues 32–52 (IDSL…FHSV), 89–109 (VIAP…FMDM), 134–154 (DLNI…YYSI), 177–197 (IPVN…SLAL), 208–228 (LIFI…TLGV), and 235–255 (LIFH…LTIV).

Belongs to the ATPase A chain family. As to quaternary structure, F-type ATPases have 2 components, CF(1) - the catalytic core - and CF(0) - the membrane proton channel. CF(1) has five subunits: alpha(3), beta(3), gamma(1), delta(1), epsilon(1). CF(0) has three main subunits: a(1), b(2) and c(9-12). The alpha and beta chains form an alternating ring which encloses part of the gamma chain. CF(1) is attached to CF(0) by a central stalk formed by the gamma and epsilon chains, while a peripheral stalk is formed by the delta and b chains.

Its subcellular location is the cell inner membrane. Its function is as follows. Key component of the proton channel; it plays a direct role in the translocation of protons across the membrane. The sequence is that of ATP synthase subunit a from Shewanella piezotolerans (strain WP3 / JCM 13877).